The primary structure comprises 443 residues: D-aminoacyl-tRNA deacylase (443 aa).

This sequence belongs to the DtdA deacylase family. As to quaternary structure, monomer. The cofactor is Zn(2+).

The catalysed reaction is a D-aminoacyl-tRNA + H2O = a tRNA + a D-alpha-amino acid + H(+). The enzyme catalyses glycyl-tRNA(Ala) + H2O = tRNA(Ala) + glycine + H(+). Functionally, D-aminoacyl-tRNA deacylase with broad substrate specificity. By recycling D-aminoacyl-tRNA to D-amino acids and free tRNA molecules, this enzyme counteracts the toxicity associated with the formation of D-aminoacyl-tRNA entities in vivo. The sequence is that of D-aminoacyl-tRNA deacylase from Methanocorpusculum labreanum (strain ATCC 43576 / DSM 4855 / Z).